A 141-amino-acid chain; its full sequence is Hemoglobin subunit alpha (141 aa).

In terms of domain architecture, Globin spans 1-141 (VLSAADKTNV…VSTVLTSKYR (141 aa)). The residue at position 3 (S3) is a Phosphoserine. K7 is subject to N6-succinyllysine. At T8 the chain carries Phosphothreonine. K11 bears the N6-succinyllysine mark. N6-acetyllysine; alternate is present on K16. K16 carries the N6-succinyllysine; alternate modification. Residue S35 is modified to Phosphoserine. The residue at position 40 (K40) is an N6-succinyllysine. S49 is subject to Phosphoserine. H58 provides a ligand contact to O2. H87 lines the heme b pocket. A Phosphoserine modification is found at S102. T108 carries the phosphothreonine modification. S124 and S131 each carry phosphoserine. Phosphothreonine is present on residues T134 and T137. A Phosphoserine modification is found at S138.

Belongs to the globin family. In terms of assembly, heterotetramer of two alpha chains and two beta chains. Red blood cells.

In terms of biological role, involved in oxygen transport from the lung to the various peripheral tissues. The chain is Hemoglobin subunit alpha from Sciurus carolinensis (Eastern gray squirrel).